A 61-amino-acid polypeptide reads, in one-letter code: Small ribosomal subunit protein uS14 (61 aa).

4 residues coordinate Zn(2+): cysteine 24, cysteine 27, cysteine 40, and cysteine 43.

It belongs to the universal ribosomal protein uS14 family. Zinc-binding uS14 subfamily. In terms of assembly, part of the 30S ribosomal subunit. Contacts proteins S3 and S10. Requires Zn(2+) as cofactor.

Binds 16S rRNA, required for the assembly of 30S particles and may also be responsible for determining the conformation of the 16S rRNA at the A site. The sequence is that of Small ribosomal subunit protein uS14 from Dehalococcoides mccartyi (strain ATCC BAA-2266 / KCTC 15142 / 195) (Dehalococcoides ethenogenes (strain 195)).